A 325-amino-acid polypeptide reads, in one-letter code: Delta(1)-pyrroline-2-carboxylate reductase (325 aa).

Belongs to the ornithine cyclodeaminase/mu-crystallin family.

It carries out the reaction L-proline + NAD(+) = 1-pyrroline-2-carboxylate + NADH + H(+). The enzyme catalyses L-proline + NADP(+) = 1-pyrroline-2-carboxylate + NADPH + H(+). Its function is as follows. Catalyzes the reduction of Delta(1)-pyrroline-2-carboxylate (Pyr2C) to L-proline, using preferentially NADPH over NADH as the electron donor. Is likely involved in a degradation pathway that converts trans-3-hydroxy-L-proline (t3LHyp) to L-proline. This Bacillus cereus (strain ATCC 10987 / NRS 248) protein is Delta(1)-pyrroline-2-carboxylate reductase.